Reading from the N-terminus, the 1411-residue chain is Early endosome antigen 1 (1411 aa).

A disordered region spans residues 1–27 (MLRRILQRTPGRVGSQGSDLDSSATPI). Residues 15–27 (SQGSDLDSSATPI) are compositionally biased toward polar residues. A C2H2-type zinc finger spans residues 41–64 (FICPQCMKSLGSADELFKHYEAVH). Phosphoserine occurs at positions 52 and 70. Positions 74-1348 (GESNLALKRD…IKHTQALNRK (1275 aa)) form a coiled coil. The tract at residues 473-501 (VTNSTELQHQLDKTKQQHQEQQALQQSTT) is disordered. The span at 481 to 490 (HQLDKTKQQH) shows a compositional bias: basic and acidic residues. The segment at 1352-1410 (DNEVQNCMACGKGFSVTVRRHHCRQCGNIFCAECSAKNALTPSSKKPVRVCDACFNDLQ) adopts an FYVE-type zinc-finger fold. Residues Cys1358, Cys1361, Cys1374, Cys1377, Cys1382, Cys1385, Cys1402, and Cys1405 each contribute to the Zn(2+) site.

In terms of assembly, homodimer. Binds STX6. Binds RAB5A, RAB5B, RAB5C and RAB22A that have been activated by GTP-binding. Interacts with RAB31. Interacts with ERBB2. Interacts with SAMD9 and SAMD9L. May interact with PLEKHF2.

The protein localises to the cytoplasm. Its subcellular location is the early endosome membrane. Functionally, binds phospholipid vesicles containing phosphatidylinositol 3-phosphate and participates in endosomal trafficking. The polypeptide is Early endosome antigen 1 (EEA1) (Homo sapiens (Human)).